A 146-amino-acid chain; its full sequence is Hemoglobin subunit beta-C (146 aa).

Residues 2 to 146 (EWTDFERATI…VVSSLGRQYH (145 aa)) enclose the Globin domain. 2 residues coordinate heme b: histidine 63 and histidine 92.

It belongs to the globin family. HbC is a heterotetramer of two alpha chains and two beta-C chains. In terms of tissue distribution, red blood cells.

In terms of biological role, involved in oxygen transport from gills to the various peripheral tissues. In Trematomus bernacchii (Emerald rockcod), this protein is Hemoglobin subunit beta-C (hbbc).